A 282-amino-acid chain; its full sequence is Protein-glutamine deamidase Cif (282 aa).

Residues methionine 1–threonine 16 are translocation domain (TD). Catalysis depends on residues cysteine 109, histidine 165, and glutamine 185.

It belongs to the Cif family.

The protein resides in the secreted. It localises to the host nucleus. The catalysed reaction is L-glutaminyl-[protein] + H2O = L-glutamyl-[protein] + NH4(+). In terms of biological role, protein-glutamine deamidase effector that inhibits the host cell cycle and other key cellular processes such as the actin network and programmed-cell death. Acts by mediating the side chain deamidation of 'Gln-40' of host NEDD8, converting it to glutamate, thereby abolishing the activity of cullin-RING-based E3 ubiquitin-protein ligase complexes (CRL complexes). Inactivation of CRL complexes prevents ubiquitination and subsequent degradation of the cyclin-dependent kinase inhibitors CDKN1A/p21 and CDKN1B/p27, leading to G1 and G2 cell cycle arrests in host cells. Also able to catalyze deamidation of 'Gln-40' of host ubiquitin in vitro; however, NEDD8 constitutes the preferred substrate in vivo. The chain is Protein-glutamine deamidase Cif from Escherichia coli.